Reading from the N-terminus, the 275-residue chain is Small ribosomal subunit protein uS3 (275 aa).

The KH type-2 domain occupies 38-106; it reads IRRMMTSGME…QVQLNILEVK (69 aa). A compositionally biased stretch (low complexity) spans 216–228; the sequence is NAAARAGNRPARG. The tract at residues 216 to 275 is disordered; that stretch reads NAAARAGNRPARGGADRPARGGRGGERGGRGRKPQQAPAAEAPKAEAPAAAPAESTGTEA. Positions 229-244 are enriched in basic and acidic residues; it reads GADRPARGGRGGERGG. Residues 249–268 are compositionally biased toward low complexity; the sequence is PQQAPAAEAPKAEAPAAAPA.

It belongs to the universal ribosomal protein uS3 family. As to quaternary structure, part of the 30S ribosomal subunit. Forms a tight complex with proteins S10 and S14.

Binds the lower part of the 30S subunit head. Binds mRNA in the 70S ribosome, positioning it for translation. The sequence is that of Small ribosomal subunit protein uS3 from Streptomyces avermitilis (strain ATCC 31267 / DSM 46492 / JCM 5070 / NBRC 14893 / NCIMB 12804 / NRRL 8165 / MA-4680).